We begin with the raw amino-acid sequence, 292 residues long: Ribosomal protein L11 methyltransferase (292 aa).

S-adenosyl-L-methionine-binding residues include Thr144, Gly165, Asp187, and Asn229.

The protein belongs to the methyltransferase superfamily. PrmA family.

It localises to the cytoplasm. It carries out the reaction L-lysyl-[protein] + 3 S-adenosyl-L-methionine = N(6),N(6),N(6)-trimethyl-L-lysyl-[protein] + 3 S-adenosyl-L-homocysteine + 3 H(+). In terms of biological role, methylates ribosomal protein L11. The polypeptide is Ribosomal protein L11 methyltransferase (Ectopseudomonas mendocina (strain ymp) (Pseudomonas mendocina)).